The following is a 679-amino-acid chain: DNA ligase (679 aa).

Residues 36-40 and 94-95 each bind NAD(+); these read DEYYD and SL. Lys-126 functions as the N6-AMP-lysine intermediate in the catalytic mechanism. NAD(+)-binding residues include Arg-147, Glu-181, Lys-299, and Lys-323. Zn(2+) is bound by residues Cys-415, Cys-418, Cys-433, and Cys-438. A BRCT domain is found at 603 to 679; that stretch reads IQSTKLENKT…DEEFLKKMLE (77 aa).

It belongs to the NAD-dependent DNA ligase family. LigA subfamily. Requires Mg(2+) as cofactor. Mn(2+) serves as cofactor.

It carries out the reaction NAD(+) + (deoxyribonucleotide)n-3'-hydroxyl + 5'-phospho-(deoxyribonucleotide)m = (deoxyribonucleotide)n+m + AMP + beta-nicotinamide D-nucleotide.. Functionally, DNA ligase that catalyzes the formation of phosphodiester linkages between 5'-phosphoryl and 3'-hydroxyl groups in double-stranded DNA using NAD as a coenzyme and as the energy source for the reaction. It is essential for DNA replication and repair of damaged DNA. This chain is DNA ligase, found in Mycoplasmopsis pulmonis (strain UAB CTIP) (Mycoplasma pulmonis).